A 603-amino-acid polypeptide reads, in one-letter code: Insulin-like growth factor-binding protein complex acid labile subunit (603 aa).

A signal peptide spans 1-23 (MALRTGGPALVVLLAFWVALGPC). Residues 32–74 (ASADAEGPQCPVACTCSHDDYTDELSVFCSSKNLTHLPDDIPV) form the LRRNT domain. 2 disulfides stabilise this stretch: C41/C47 and C45/C60. N64, N85, and N96 each carry an N-linked (GlcNAc...) asparagine glycan. 19 LRR repeats span residues 75-96 (STRA…AFQN), 99-120 (SLDF…ALLG), 123-144 (NLYY…LFTH), 147-168 (SLAS…LFQG), 171-192 (HLWD…VFQG), 195-216 (NLHE…LFCG), 219-240 (ELRE…VFVH), 243-264 (RLQK…AFLG), 267-288 (ALRW…TFPG), 291-312 (GLHV…TFKD), 315-336 (FLEE…TFEG), 339-360 (QLEV…AFSG), 363-384 (NVAV…VFQG), 387-408 (KLHS…TFAG), 411-432 (GLRR…SLAG), 435-456 (ELLE…LFQG), 459-480 (HLEY…VLGP), 483-504 (RAFW…LFSS), and 507-528 (RVRY…PGLE). N368 carries an N-linked (GlcNAc...) asparagine glycan. N-linked (GlcNAc...) asparagine glycosylation occurs at N515. Residues 535–603 (NPWDCSCPLK…DVSETHFVHC (69 aa)) enclose the LRRCT domain. Intrachain disulfides connect C539/C581, C541/C603, and C565/C570. N-linked (GlcNAc...) asparagine glycosylation is found at N578 and N586.

In terms of assembly, forms a ternary complex with IGF1 and IGFBP3. As to expression, brain, kidney, lung, heart, spleen, muscle and liver.

Its subcellular location is the secreted. The protein localises to the extracellular space. Its function is as follows. May have an important role in regulating the access of circulating IGFs to the tissues. The polypeptide is Insulin-like growth factor-binding protein complex acid labile subunit (Igfals) (Rattus norvegicus (Rat)).